The primary structure comprises 348 residues: Structural glycoprotein p40 (348 aa).

It belongs to the baculoviridae gp41 family. Post-translationally, O-glycosylated; contains N-acetylglucosamine side chains.

The sequence is that of Structural glycoprotein p40 (P40) from Bombyx mori nuclear polyhedrosis virus (BmNPV).